The sequence spans 299 residues: Leucine zipper transcription factor-like protein 1 (299 aa).

Residues Leu-96 to Asp-299 adopt a coiled-coil conformation. An interaction with BSS9 region spans residues Gly-145–Asp-299.

This sequence belongs to the LZTFL1 family. Self-associates. Interacts with BBS9; the interaction mediates the association of LZTL1 with the BBsome complex and regulates BBSome ciliary trafficking. Highly expressed in testis. Expressed in brain, cerebellum, eye, heart, kidney, liver, lung and trachea. In small intestine, graded expression along the crypt-villus axis with high levels in the villus apex and lower levels in the crypt stem cells (at protein level). Not expressed in skeletal muscle and white adipose tissue.

The protein localises to the cytoplasm. Regulates ciliary localization of the BBSome complex. Together with the BBSome complex, controls SMO ciliary trafficking and contributes to the sonic hedgehog (SHH) pathway regulation. May play a role in neurite outgrowth. May have tumor suppressor function. The chain is Leucine zipper transcription factor-like protein 1 (Lztfl1) from Mus musculus (Mouse).